A 496-amino-acid polypeptide reads, in one-letter code: MASLQTPVMVGTVVGCVAGVVGFLAMSSNAATSLSVAPASTSTQIIANPSVIAPQYQGSVTSEDVAMEASQTDFAEVAEISSPVQVQSWSMIFSAMLAVPLAAAAMFFMKKSTTEERRPLVSIDDLLSVGKKAVVASAVVGAAAGSANAYPIFAQQAYGNPREATGRIVCANCHLASKPTEIEVPQAVLPDQVFEAVTKVPFSGPSGFFNVVDPSTVVGSVTFAGTQPVGFIQESGVPVSQALVDIATPGTPDTVFKATIKVPYDESLKQVAGNGRAAPLNVGAVLILPEGFRLAPPERIPEKMKEEINGLQFIQYSKDTPNILVVGPVPGKKYAEMTVALLSPDPRVDKKAEFGTLPIYVGGNRGRGQLYPTGEKSNNNIYNVEHSGKIADIQLNEKKRIYTVAVQQKDGEIINEDLPAGAELIVKVGDVVEAGQAISTNPNVGGFGQAESEIVLQNPGRVQAFLFFSFTVLATQTLLVVKKKQYEQVQLSEMNF.

A chloroplast-targeting transit peptide spans 1-149 (MASLQTPVMV…VGAAAGSANA (149 aa)). Heme is bound by residues Tyr-150, Cys-170, Cys-173, and His-174. A helical transmembrane segment spans residues 462-481 (VQAFLFFSFTVLATQTLLVV).

The protein belongs to the cytochrome f family. As to quaternary structure, interacts with plastocyanin and Rieske iron-sulfur protein. Requires heme as cofactor.

It localises to the plastid. It is found in the chloroplast thylakoid membrane. Its function is as follows. Translocates protons across the thylakoid membrane and transfers electrons from photosystem II to photosystem I. It receives electrons from the Rieske iron-sulfur protein and passes them to plastocyanin. The sequence is that of Cytochrome f, chloroplastic (petA) from Euglena gracilis.